Reading from the N-terminus, the 202-residue chain is uncharacterized protein (202 aa).

The protein localises to the mitochondrion. This is an uncharacterized protein from Schizosaccharomyces pombe (strain 972 / ATCC 24843) (Fission yeast).